We begin with the raw amino-acid sequence, 1005 residues long: Mitogen-activated protein kinase kinase kinase 10 (1005 aa).

Residues 32-96 (VSNPLWMAVF…PSNYVVSDDK (65 aa)) form the SH3 domain. One can recognise a Protein kinase domain in the interval 118–380 (LNLDEIIGVG…SCILEQLTTI (263 aa)). Residues 124–132 (IGVGGFGKV) and Lys145 each bind ATP. Asp242 functions as the Proton acceptor in the catalytic mechanism. Leucine-zipper regions lie at residues 404 to 425 (IQQM…EEEL) and 439 to 460 (LKRR…ELNI). Disordered regions lie at residues 551–611 (SVLK…KHTP), 647–676 (QSDH…QSRR), 712–736 (FQWA…GEDS), and 758–940 (RSLI…AEGA). Composition is skewed to basic and acidic residues over residues 576 to 588 (QKER…RLKT) and 648 to 658 (SDHRSHPEDTA). 2 stretches are compositionally biased toward basic and acidic residues: residues 761–786 (IRSD…EDRG) and 799–809 (YKVESFKRDPK). Positions 810 to 826 (QSLTPTHVTVGRNNTTE) are enriched in polar residues. A compositionally biased stretch (pro residues) spans 862 to 879 (EPSPFPRLPDPHFVFPPP). Positions 915 to 940 (SLSQTHSSSPSSGGGDACSSGSAEGA) are enriched in low complexity.

Belongs to the protein kinase superfamily. STE Ser/Thr protein kinase family. MAP kinase kinase kinase subfamily. Homodimer. Binds to the GTPase rac1 but not cdc42 or rhoA. Interacts (via kinase domain) with pak1 (via kinase domain). Interacts with the ubiquitin-conjugating enzyme ube2d4. It depends on Mg(2+) as a cofactor. Post-translationally, autophosphorylation on serine and threonine residues within the activation loop plays a role in enzyme activation. In terms of processing, mono- and poly-ubiquitinated. As to expression, in adults, strongly expressed in the brain and spleen with lower levels in pancreas, heart, muscle and kidney (at protein level). In the developing embryo, expressed at stage 22 in the cement gland. Weakly expressed in the pronephros from stage 24 or 25, with expression increasing in strength by stage 30 and continuing at least until stage 37. Expression in the developing pronephros correlates with epithelialization of the proximal pronephric tubules.

The catalysed reaction is L-seryl-[protein] + ATP = O-phospho-L-seryl-[protein] + ADP + H(+). The enzyme catalyses L-threonyl-[protein] + ATP = O-phospho-L-threonyl-[protein] + ADP + H(+). Its activity is regulated as follows. Homodimerization via the leucine zipper domains is required for autophosphorylation and subsequent activation. Its function is as follows. Activates the JUN N-terminal pathway. Essential for pronephros and cement gland development. This Xenopus laevis (African clawed frog) protein is Mitogen-activated protein kinase kinase kinase 10 (map3k10).